A 270-amino-acid polypeptide reads, in one-letter code: High choriolytic enzyme 1 (270 aa).

The signal sequence occupies residues 1 to 20 (MNLAPSTCLLLLFLLDIAQA). Positions 21-70 (LPVWDEEGHEEGHEEGDGDDFVDITTRILTSNNNTDQLLLEGDLVAPTNR) are cleaved as a propeptide — activation peptide. An N-linked (GlcNAc...) asparagine glycan is attached at Asn-53. The Peptidase M12A domain maps to 71-270 (NAMKCWSSSC…TRINVLYNCR (200 aa)). Disulfide bonds link Cys-75-Cys-80, Cys-120-Cys-269, and Cys-141-Cys-161. Residue His-169 participates in Zn(2+) binding. Glu-170 is an active-site residue. Zn(2+) contacts are provided by His-173 and His-179.

Zn(2+) serves as cofactor.

It is found in the zymogen granule. It carries out the reaction Hydrolysis of the inner layer of fish egg envelope. Also hydrolysis of casein and small molecule substrates such as succinyl-Leu-Leu-Val-Tyr-|-7-(4-methyl)coumarylamide.. Participates in the breakdown of the egg envelope, which is derived from the egg extracellular matrix, at the time of hatching. Thus allowing the newly hatched fish to swim free. HCE binds tightly to the egg envelope while it exerts the choriolytic swelling action. This chain is High choriolytic enzyme 1 (hcea), found in Oryzias latipes (Japanese rice fish).